The sequence spans 103 residues: Putative membrane protein insertion efficiency factor (103 aa).

It belongs to the UPF0161 family.

The protein resides in the cell inner membrane. In terms of biological role, could be involved in insertion of integral membrane proteins into the membrane. The chain is Putative membrane protein insertion efficiency factor from Chlamydia abortus (strain DSM 27085 / S26/3) (Chlamydophila abortus).